The chain runs to 349 residues: Green-sensitive opsin-1 (349 aa).

The Extracellular segment spans residues 1-36 (MNGTEGKNFYVPMSNRTGLVRSPFEYPQYYLAEPWQ). 2 N-linked (GlcNAc...) asparagine glycosylation sites follow: Asn-2 and Asn-15. Residues 37-61 (FKILALYLFFLMSMGLPINGLTLVV) form a helical membrane-spanning segment. Residues 62–73 (TAQHKKLRQPLN) lie on the Cytoplasmic side of the membrane. The helical transmembrane segment at 74–99 (FILVNLAVAGTIMVCFGFTVTFYTAI) threads the bilayer. Over 100–113 (NGYFVLGPTGCAVE) the chain is Extracellular. A disulfide bridge links Cys-110 with Cys-187. A helical transmembrane segment spans residues 114–133 (GFMATLGGEVALWSLVVLAI). Residues 134–152 (ERYIVVCKPMGSFKFSSSH) lie on the Cytoplasmic side of the membrane. The helical transmembrane segment at 153–176 (AFAGIAFTWVMALACAAPPLFGWS) threads the bilayer. The Extracellular segment spans residues 177 to 202 (RYIPEGMQCSCGPDYYTLNPDYNNES). Residues 203–230 (YVIYMFVCHFILPVAVIFFTYGRLVCTV) traverse the membrane as a helical segment. Residues 231–252 (KAAAAQQQDSASTQKAEREVTK) lie on the Cytoplasmic side of the membrane. The chain crosses the membrane as a helical span at residues 253–276 (MVILMVFGFLIAWTPYATVAAWIF). Over 277–284 (FNKGADFS) the chain is Extracellular. The chain crosses the membrane as a helical span at residues 285 to 309 (AKFMAIPAFFSKSSALYNPVIYVLL). Position 296 is an N6-(retinylidene)lysine (Lys-296). Residues 310 to 349 (NKQFRNCMLTTIFCGKNPLGDDESSTVSTSKTEVSSVSPA) are Cytoplasmic-facing. Residues 329-349 (GDDESSTVSTSKTEVSSVSPA) form a disordered region. Low complexity predominate over residues 334-349 (STVSTSKTEVSSVSPA).

This sequence belongs to the G-protein coupled receptor 1 family. Opsin subfamily. In terms of processing, phosphorylated on some or all of the serine and threonine residues present in the C-terminal region. As to expression, the color pigments are found in the cone photoreceptor cells.

The protein localises to the membrane. In terms of biological role, visual pigments are the light-absorbing molecules that mediate vision. They consist of an apoprotein, opsin, covalently linked to cis-retinal. The protein is Green-sensitive opsin-1 of Carassius auratus (Goldfish).